The primary structure comprises 298 residues: UPF0696 protein C11orf68 homolog (298 aa).

A compositionally biased stretch (low complexity) spans 1–10 (MAAAAAAVAG). The tract at residues 1-66 (MAAAAAAVAG…EDSPGGREDG (66 aa)) is disordered. A compositionally biased stretch (gly residues) spans 11–25 (AGRGGGGGGGGGGAA). Basic and acidic residues predominate over residues 41 to 50 (ERSEGRRMEP).

The protein belongs to the UPF0696 family.

This is UPF0696 protein C11orf68 homolog (Bles03) from Mus musculus (Mouse).